Reading from the N-terminus, the 648-residue chain is Macrolide export ATP-binding/permease protein MacB (648 aa).

In terms of domain architecture, ABC transporter spans 5 to 243 (LELKDIRRSY…TGGTEPVVNT (239 aa)). 41 to 48 (GASGSGKS) serves as a coordination point for ATP. Helical transmembrane passes span 273–293 (LLTM…VVVG), 523–543 (LFLT…VMNI), 576–596 (AVLV…LIAF), and 611–631 (PLAL…FGWL).

The protein belongs to the ABC transporter superfamily. Macrolide exporter (TC 3.A.1.122) family. As to quaternary structure, homodimer. Part of the tripartite efflux system MacAB-TolC, which is composed of an inner membrane transporter, MacB, a periplasmic membrane fusion protein, MacA, and an outer membrane component, TolC. The complex forms a large protein conduit and can translocate molecules across both the inner and outer membranes. Interacts with MacA.

The protein localises to the cell inner membrane. Part of the tripartite efflux system MacAB-TolC. MacB is a non-canonical ABC transporter that contains transmembrane domains (TMD), which form a pore in the inner membrane, and an ATP-binding domain (NBD), which is responsible for energy generation. Confers resistance against macrolides. This is Macrolide export ATP-binding/permease protein MacB from Escherichia coli (strain UTI89 / UPEC).